The primary structure comprises 264 residues: Acyl-[acyl-carrier-protein]--UDP-N-acetylglucosamine O-acyltransferase (264 aa).

This sequence belongs to the transferase hexapeptide repeat family. LpxA subfamily. Homotrimer.

Its subcellular location is the cytoplasm. The catalysed reaction is a (3R)-hydroxyacyl-[ACP] + UDP-N-acetyl-alpha-D-glucosamine = a UDP-3-O-[(3R)-3-hydroxyacyl]-N-acetyl-alpha-D-glucosamine + holo-[ACP]. The protein operates within glycolipid biosynthesis; lipid IV(A) biosynthesis; lipid IV(A) from (3R)-3-hydroxytetradecanoyl-[acyl-carrier-protein] and UDP-N-acetyl-alpha-D-glucosamine: step 1/6. Its function is as follows. Involved in the biosynthesis of lipid A, a phosphorylated glycolipid that anchors the lipopolysaccharide to the outer membrane of the cell. In Rickettsia conorii (strain ATCC VR-613 / Malish 7), this protein is Acyl-[acyl-carrier-protein]--UDP-N-acetylglucosamine O-acyltransferase.